We begin with the raw amino-acid sequence, 328 residues long: Phenylalanine--tRNA ligase alpha subunit (328 aa).

Glu253 serves as a coordination point for Mg(2+).

It belongs to the class-II aminoacyl-tRNA synthetase family. Phe-tRNA synthetase alpha subunit type 1 subfamily. In terms of assembly, tetramer of two alpha and two beta subunits. It depends on Mg(2+) as a cofactor.

The protein localises to the cytoplasm. It carries out the reaction tRNA(Phe) + L-phenylalanine + ATP = L-phenylalanyl-tRNA(Phe) + AMP + diphosphate + H(+). This is Phenylalanine--tRNA ligase alpha subunit from Coxiella burnetii (strain CbuG_Q212) (Coxiella burnetii (strain Q212)).